The primary structure comprises 75 residues: DNA-directed RNA polymerase subunit omega (75 aa).

Belongs to the RNA polymerase subunit omega family. As to quaternary structure, in cyanobacteria the RNAP catalytic core is composed of 2 alpha, 1 beta, 1 beta', 1 gamma and 1 omega subunit. When a sigma factor is associated with the core the holoenzyme is formed, which can initiate transcription.

The enzyme catalyses RNA(n) + a ribonucleoside 5'-triphosphate = RNA(n+1) + diphosphate. Promotes RNA polymerase assembly. Latches the N- and C-terminal regions of the beta' subunit thereby facilitating its interaction with the beta and alpha subunits. This is DNA-directed RNA polymerase subunit omega from Microcystis aeruginosa (strain NIES-843 / IAM M-2473).